A 1476-amino-acid chain; its full sequence is Coiled-coil domain-containing protein 88B (1476 aa).

The stretch at Ser253–Gln481 forms a coiled coil. Disordered stretches follow at residues Gln427–Asp451, Val509–Leu706, Arg825–Glu866, and Leu1323–Gln1476. Ser436 is modified (phosphoserine). Residues Ser572–Gln586 are compositionally biased toward polar residues. Position 596 is a phosphoserine (Ser596). Composition is skewed to basic and acidic residues over residues Glu678–Val690, Arg825–Arg834, and Ala842–Glu866. Positions Leu720–Glu1303 form a coiled coil. Ser1348 and Ser1379 each carry phosphoserine. Over residues Leu1448 to Pro1469 the composition is skewed to basic and acidic residues.

It belongs to the CCDC88 family. As to quaternary structure, homodimer. Interacts with DOCK8. Interacts (via C-terminus) with intact microtubules. Interacts with dynein-dynactin motor complex. Interacts (via C-terminus) with HSPA5. In terms of tissue distribution, expressed in endothelium (at protein level). Expressed in NK cells (at protein level).

It localises to the membrane. The protein resides in the cytoplasm. It is found in the cytoskeleton. Its subcellular location is the microtubule organizing center. The protein localises to the endoplasmic reticulum. It localises to the golgi apparatus. Its function is as follows. Acts as a positive regulator of T-cell maturation and inflammatory function. Required for several functions of T-cells, in both the CD4(+) and the CD8(+) compartments and this includes expression of cell surface markers of activation, proliferation, and cytokine production in response to specific or non-specific stimulation. Enhances NK cell cytotoxicity by positively regulating polarization of microtubule-organizing center (MTOC) to cytotoxic synapse, lytic granule transport along microtubules, and dynein-mediated clustering to MTOC. Interacts with HSPA5 and stabilizes the interaction between HSPA5 and ERN1, leading to suppression of ERN1-induced JNK activation and endoplasmic reticulum stress-induced apoptosis. In Homo sapiens (Human), this protein is Coiled-coil domain-containing protein 88B (CCDC88B).